The sequence spans 24 residues: Lycosin-I (24 aa).

The protein belongs to the cationic peptide 04 (cupiennin) family. 05 subfamily. As to quaternary structure, monomer in solution. Small size oligomers on the lipid membranes.

It localises to the secreted. It is found in the target cell membrane. In terms of biological role, antimicrobial peptide that inhibits many reference strains of bacteria and fungi. Is potent against Candida species and multidrug-resistant Acinetobacter baumannii (MDRAB). Is probably localized in the cytoplasm after being transported through the cell wall and membrane. Is able to interact with cell membranes and enter into cell plasma to activate the mitochondrial death pathway to sensitize cancer cells for apoptosis, as well as up-regulates p27 to inhibit cell proliferation. It shows very low effect on normal cells, such as erythrocytes, Hek293t cells. It also potently inhibits tumor cell growth in vitro, and suppresses various tumor growth in vivo when tested in human cancer xenograft models. It interacts with the cell membrane and is then internalized into the cytoplasm of cancer cells to initiate the programmable cell death. In addition, this peptide has the therapeutic effects of anti-hypertension by endothelium-dependent vasodilatation via the NO/sGC/cGMP signaling pathway. In vivo, this peptide also shows a significant ability to inhibit T.gondii invasion and proliferation, making it a potential alternative agent for the treatment of toxoplasmosis. This is Lycosin-I from Lycosa singoriensis (Wolf spider).